A 564-amino-acid chain; its full sequence is Ribulokinase (564 aa).

This sequence belongs to the ribulokinase family.

The catalysed reaction is D-ribulose + ATP = D-ribulose 5-phosphate + ADP + H(+). It carries out the reaction L-ribulose + ATP = L-ribulose 5-phosphate + ADP + H(+). The protein operates within carbohydrate degradation; L-arabinose degradation via L-ribulose; D-xylulose 5-phosphate from L-arabinose (bacterial route): step 2/3. This Anoxybacillus flavithermus (strain DSM 21510 / WK1) protein is Ribulokinase.